The following is a 412-amino-acid chain: MRYADPSANRDLLGNRTLLFIFICAFALVTLLQQILYSKSYIKRGFQFGWQRGDQQANWTGLFNDSDSPTEQNITGSSSRYFEFYKEPLEFNSTRCLELRQEILEVKVLSMVKQSELFERWKSLQICKWAMDTAEASLFKSTLSRCCNAPSFLFTTQKNTPVETNLRYEVESSGLYHIDQEIFKMFPKEMPYYRSQFKKCAVVGNGGILKNSGCGKEINSADFVFRCNLPPISGIYTTDVGEKTDVVTVNPSIIIDRFHKLEKWRRPFFSVLQRYENASVLLPAFYNVRNTLVSFRVKYMLDDFQSRQPVYFFHPQYLSSVSRYWLSLGVRARRISTGLILVTAALELCEEVHLFGFWAFPMNPSGFFITHHYYDNVKPKPGFHAMPSEIFTFLRMHSRGILRVHTGTCNCC.

At 1-16 (MRYADPSANRDLLGNR) the chain is on the cytoplasmic side. The chain crosses the membrane as a helical; Signal-anchor for type II membrane protein span at residues 17–37 (TLLFIFICAFALVTLLQQILY). Topologically, residues 38–412 (SKSYIKRGFQ…RVHTGTCNCC (375 aa)) are lumenal. N-linked (GlcNAc...) asparagine glycans are attached at residues N58, N64, N73, and N92. 2 disulfide bridges follow: C200/C349 and C214/C409. Substrate contacts are provided by residues N228 and 250–252 (NPS). An N-linked (GlcNAc...) asparagine glycan is attached at N277. 336 to 338 (STG) serves as a coordination point for substrate. H384 serves as the catalytic Proton donor/acceptor.

The protein belongs to the glycosyltransferase 29 family. Highly expressed in brain. Expressed at low levels in other tissues, including liver, testis, lung, placenta and spleen.

The protein localises to the golgi apparatus membrane. It carries out the reaction a ganglioside GT1b (d18:1(4E)) + CMP-N-acetyl-beta-neuraminate = a ganglioside GQ1b (d18:1(4E)) + CMP + H(+). It catalyses the reaction a ganglioside GD3 (d18:1(4E)) + CMP-N-acetyl-beta-neuraminate = a ganglioside GT3 (d18:1(4E)) + CMP + H(+). The enzyme catalyses a ganglioside GD1a (d18:1(4E)) + CMP-N-acetyl-beta-neuraminate = a ganglioside GT1a (d18:1(4E)) + CMP + H(+). The catalysed reaction is a ganglioside GM1b (d18:1(4E)) + CMP-N-acetyl-beta-neuraminate = a ganglioside GD1c (d18:1(4E)) + CMP + H(+). It carries out the reaction a ganglioside GQ1c (d18:1(4E)) + CMP-N-acetyl-beta-neuraminate = a ganglioside GP1c (d18:1(4E)) + CMP + H(+). It participates in protein modification; protein glycosylation. Its function is as follows. Involved in the synthesis of gangliosides GD1c, GT1a, GQ1b, GP1c and GT3 from GD1a, GT1b, GM1b and GD3 respectively. This chain is Alpha-2,8-sialyltransferase 8E, found in Mus musculus (Mouse).